Here is a 615-residue protein sequence, read N- to C-terminus: Chromosomal replication initiator protein DnaA (615 aa).

The tract at residues 1 to 88 is domain I, interacts with DnaA modulators; the sequence is MSEGQINLAM…RVAVTVDPSA (88 aa). The disordered stretch occupies residues 85–272; the sequence is DPSAVPPSAP…PTSGGPDQLN (188 aa). Positions 88–269 are domain II; sequence AVPPSAPTEE…STNPTSGGPD (182 aa). Low complexity-rich tracts occupy residues 94–112 and 173–190; these read PTEE…PAPD and PSSA…VAES. The segment at 270-486 is domain III, AAA+ region; the sequence is QLNPKYTFDT…GALIRVTAFA (217 aa). The ATP site is built by Gly314, Gly316, Lys317, and Thr318. The domain IV, binds dsDNA stretch occupies residues 487 to 615; that stretch reads SLNRQSVDLH…QQAHHNHHHL (129 aa).

It belongs to the DnaA family. Oligomerizes as a right-handed, spiral filament on DNA at oriC.

Its subcellular location is the cytoplasm. Functionally, plays an essential role in the initiation and regulation of chromosomal replication. ATP-DnaA binds to the origin of replication (oriC) to initiate formation of the DNA replication initiation complex once per cell cycle. Binds the DnaA box (a 9 base pair repeat at the origin) and separates the double-stranded (ds)DNA. Forms a right-handed helical filament on oriC DNA; dsDNA binds to the exterior of the filament while single-stranded (ss)DNA is stabiized in the filament's interior. The ATP-DnaA-oriC complex binds and stabilizes one strand of the AT-rich DNA unwinding element (DUE), permitting loading of DNA polymerase. After initiation quickly degrades to an ADP-DnaA complex that is not apt for DNA replication. Binds acidic phospholipids. The sequence is that of Chromosomal replication initiator protein DnaA from Thermobifida fusca (strain YX).